The following is a 198-amino-acid chain: Protein GrpE (198 aa).

Positions 1-14 (MSNEENKINEEALK) are enriched in basic and acidic residues. The tract at residues 1–20 (MSNEENKINEEALKQQDAAE) is disordered.

The protein belongs to the GrpE family. Homodimer.

It is found in the cytoplasm. In terms of biological role, participates actively in the response to hyperosmotic and heat shock by preventing the aggregation of stress-denatured proteins, in association with DnaK and GrpE. It is the nucleotide exchange factor for DnaK and may function as a thermosensor. Unfolded proteins bind initially to DnaJ; upon interaction with the DnaJ-bound protein, DnaK hydrolyzes its bound ATP, resulting in the formation of a stable complex. GrpE releases ADP from DnaK; ATP binding to DnaK triggers the release of the substrate protein, thus completing the reaction cycle. Several rounds of ATP-dependent interactions between DnaJ, DnaK and GrpE are required for fully efficient folding. In Vibrio vulnificus (strain YJ016), this protein is Protein GrpE.